The chain runs to 114 residues: Ribonuclease P protein component (114 aa).

The protein belongs to the RnpA family. Consists of a catalytic RNA component (M1 or rnpB) and a protein subunit.

It carries out the reaction Endonucleolytic cleavage of RNA, removing 5'-extranucleotides from tRNA precursor.. RNaseP catalyzes the removal of the 5'-leader sequence from pre-tRNA to produce the mature 5'-terminus. It can also cleave other RNA substrates such as 4.5S RNA. The protein component plays an auxiliary but essential role in vivo by binding to the 5'-leader sequence and broadening the substrate specificity of the ribozyme. In Alkaliphilus oremlandii (strain OhILAs) (Clostridium oremlandii (strain OhILAs)), this protein is Ribonuclease P protein component.